The primary structure comprises 798 residues: Suppressor of spindle checkpoint defect 1 (798 aa).

Positions 339–359 (ESIQQSQVNVDDMCNRIANME) form a coiled coil.

The protein belongs to the APC5 family. The APC/C complex is probably composed of at least 12 subunits: apc-2, apc-10, apc-11, cdc-26, emb-1, emb-27, emb-30, mat-1, mat-2, mat-3, such-1 and gfi-3. In terms of tissue distribution, expressed in head neurons, vulval precursor cells and in mature sperm stored in the spermatheca.

Its pathway is protein modification; protein ubiquitination. Functionally, probable component of the anaphase promoting complex/cyclosome (APC/C), a cell cycle-regulated E3 ubiquitin ligase that controls progression through mitosis and the G1 phase of the cell cycle. The APC/C complex acts by mediating ubiquitination and subsequent degradation of target proteins. Required for the metaphase to anaphase transition in meiosis. Plays a role in the segregation of DNA and centrioles during meiosis in male germ cells. The protein is Suppressor of spindle checkpoint defect 1 of Caenorhabditis elegans.